The following is a 90-amino-acid chain: Small ribosomal subunit protein bS16 (90 aa).

Belongs to the bacterial ribosomal protein bS16 family.

This Fervidobacterium nodosum (strain ATCC 35602 / DSM 5306 / Rt17-B1) protein is Small ribosomal subunit protein bS16.